A 546-amino-acid chain; its full sequence is uncharacterized protein (546 aa).

3 disordered regions span residues 37 to 101, 269 to 300, and 392 to 443; these read KEND…NQKL, QNKAAADLRKTESHGTHSQSTPPQHSSSQPEV, and LSDL…TSAC. Composition is skewed to basic and acidic residues over residues 81–93 and 274–283; these read DDVKEKKHPENNQ and ADLRKTESHG. The segment covering 284–298 has biased composition (low complexity); it reads THSQSTPPQHSSSQP.

This is an uncharacterized protein from Homo sapiens (Human).